Reading from the N-terminus, the 688-residue chain is Phosphatidylinositol 4-phosphate 5-kinase type-1 gamma (688 aa).

Residues Gly48–Tyr71 are disordered. The 369-residue stretch at Thr75–Val443 folds into the PIPK domain. An N6-acetyllysine mark is found at Lys265 and Lys268. Asymmetric dimethylarginine; alternate is present on Arg459. At Arg459 the chain carries Omega-N-methylarginine; alternate. The span at Thr525–Ile534 shows a compositional bias: low complexity. Disordered regions lie at residues Thr525–Leu565 and Gly592–Ala629. The residue at position 554 (Ser554) is a Phosphoserine. Residues Ala602 to Ala623 are compositionally biased toward low complexity. Phosphotyrosine; by EGFR is present on Tyr635. Tyr671 carries the phosphotyrosine; by CSK modification. At Ser672 the chain carries Phosphoserine; by CDK5, MAPK1 and CDK1. Residues Ser682 and Ser686 each carry the phosphoserine modification. Phosphothreonine is present on Thr688.

In terms of assembly, interacts with TLN1. Interacts with TLN2; interaction stimulates 1-phosphatidylinositol-4-phosphate 5-kinase activity. May compete with beta-integrins for the same binding site on TLN1 and TLN2. Interacts with ARF6; interaction stimulates 1-phosphatidylinositol-4-phosphate 5-kinase activity. Interacts with AP2B1. Interacts with AP2M1; phosphorylation of PIP5K1C by CSK disrupts the interaction; clathrin competes with PIP5K1C. Interacts with CDH1. Interacts with CSK. Interacts with PLCG1; interaction is abolished upon EGF stimulation. Interacts with LAPTM4B; promotes SNX5 association with LAPTM4B; kinase activity of PIP5K1C is required; interaction is regulated by phosphatidylinositol 4,5-bisphosphate generated by PIP5K1C. Phosphorylation on Ser-672 negatively regulates binding to TLN2 and is strongly stimulated in mitosis. Phosphorylation on Tyr-671 is necessary for targeting to focal adhesions. Phosphorylation on Ser-672 and Tyr-671 are mutually exclusive. Phosphorylated by SYK and CSK. Tyrosine phosphorylation is enhanced by PTK2 signaling. Phosphorylated at Tyr-635 upon EGF stimulation. Some studies suggest that phosphorylation on Tyr-671 enhances binding to tailins (TLN1 and TLN2); others that phosphorylation at Tyr-671 does not directly enhance binding to tailins (TLN1 and TLN2) but may act indirectly by inhibiting phosphorylation at Ser-672. In terms of processing, acetylation at Lys-265 and Lys-268 seems to decrease lipid kinase activity. Deacetylation of these sites by SIRT1 positively regulates the exocytosis of TSH-containing granules from pituitary cells.

Its subcellular location is the cell membrane. It localises to the endomembrane system. It is found in the cytoplasm. The protein localises to the cell junction. The protein resides in the focal adhesion. Its subcellular location is the adherens junction. It localises to the cell projection. It is found in the ruffle membrane. The protein localises to the phagocytic cup. The protein resides in the uropodium. The enzyme catalyses a 1,2-diacyl-sn-glycero-3-phospho-(1D-myo-inositol 4-phosphate) + ATP = a 1,2-diacyl-sn-glycero-3-phospho-(1D-myo-inositol-4,5-bisphosphate) + ADP + H(+). It carries out the reaction 1-octadecanoyl-2-(5Z,8Z,11Z,14Z)-eicosatetraenoyl-sn-glycero-3-phospho-1D-myo-inositol 4-phosphate + ATP = 1-octadecanoyl-2-(5Z,8Z,11Z,14Z)-eicosatetraenoyl-sn-glycero-3-phospho-1D-myo-inositol 4,5-bisphosphate + ADP + H(+). It catalyses the reaction 1-octadecanoyl-2-(9Z)-octadecenoyl-sn-glycero-3-phospho-1D-myo-inositol 4-phosphate + ATP = 1-octadecanoyl-2-(9Z)-octadecenoyl-sn-glycero-3-phospho-1D-myo-inositol 4,5-bisphosphate + ADP + H(+). The catalysed reaction is 1-octadecanoyl-2-(9Z)-octadecenoyl-sn-glycero-3-phospho-1D-myo-inositol + ATP = 1-octadecanoyl-2-(9Z)-octadecenoyl-sn-glycero-3-phospho-1D-myo-inositol 5-phosphate + ADP + H(+). The enzyme catalyses 1-octadecanoyl-2-(9Z,12Z)-octadecadienoyl-sn-glycero-3-phospho-1D-myo-inositol + ATP = 1-octadecanoyl-2-(9Z,12Z)-octadecadienoyl-sn-glycero-3-phospho-1D-myo-inositol 5-phosphate + ADP + H(+). It carries out the reaction 1-octadecanoyl-2-(5Z,8Z,11Z,14Z-eicosatetraenoyl)-sn-glycero-3-phospho-(1D-myo-inositol) + ATP = 1-octadecanoyl-2-(5Z,8Z,11Z,14Z)-eicosatetraenoyl-sn-glycero-3-phospho-1D-myo-inositol 5-phosphate + ADP + H(+). It catalyses the reaction 1,2-di-(9Z,12Z)-octadecadienoyl-sn-glycero-3-phospho-1D-myo-inositol + ATP = 1,2-di(9Z,12Z)-octadecadienoyl-sn-glycero-3-phospho-1D-myo-inositol 5-phosphate + ADP + H(+). Functionally, catalyzes the phosphorylation of phosphatidylinositol 4-phosphate (PtdIns(4)P/PI4P) to form phosphatidylinositol 4,5-bisphosphate (PtdIns(4,5)P2/PIP2), a lipid second messenger that regulates several cellular processes such as signal transduction, vesicle trafficking, actin cytoskeleton dynamics, cell adhesion, and cell motility. PtdIns(4,5)P2 can directly act as a second messenger or can be utilized as a precursor to generate other second messengers: inositol 1,4,5-trisphosphate (IP3), diacylglycerol (DAG) or phosphatidylinositol-3,4,5-trisphosphate (PtdIns(3,4,5)P3/PIP3). PIP5K1A-mediated phosphorylation of PtdIns(4)P is the predominant pathway for PtdIns(4,5)P2 synthesis. Together with PIP5K1A, is required for phagocytosis, both enzymes regulating different types of actin remodeling at sequential steps. Promotes particle attachment by generating the pool of PtdIns(4,5)P2 that induces controlled actin depolymerization to facilitate Fc-gamma-R clustering. Mediates RAC1-dependent reorganization of actin filaments. Required for synaptic vesicle transport. Controls the plasma membrane pool of PtdIns(4,5)P2 implicated in synaptic vesicle endocytosis and exocytosis. Plays a role in endocytosis mediated by clathrin and AP-2 (adaptor protein complex 2). Required for clathrin-coated pits assembly at the synapse. Participates in cell junction assembly. Modulates adherens junctions formation by facilitating CDH1/cadherin trafficking. Required for focal adhesion dynamics. Modulates the targeting of talins (TLN1 and TLN2) to the plasma membrane and their efficient assembly into focal adhesions. Regulates the interaction between talins (TLN1 and TLN2) and beta-integrins. Required for uropodium formation and retraction of the cell rear during directed migration. Has a role in growth factor-stimulated directional cell migration and adhesion. Required for talin assembly into nascent adhesions forming at the leading edge toward the direction of the growth factor. Negative regulator of T-cell activation and adhesion. Negatively regulates integrin alpha-L/beta-2 (LFA-1) polarization and adhesion induced by T-cell receptor. Together with PIP5K1A has a role during embryogenesis and together with PIP5K1B may have a role immediately after birth. This is Phosphatidylinositol 4-phosphate 5-kinase type-1 gamma from Rattus norvegicus (Rat).